The sequence spans 1102 residues: PAN2-PAN3 deadenylation complex catalytic subunit PAN2 (1102 aa).

WD repeat units lie at residues Asp20–Ala59, Asp104–Gln144, and Asn269–Asp308. Residues Asp308–Pro445 are linker. The segment at Ala423–Ser442 is disordered. Residues Glu446–Lys833 enclose the USP domain. An Exonuclease domain is found at Val881–Tyr1054. Positions 884, 886, 993, and 1046 each coordinate a divalent metal cation.

The protein belongs to the peptidase C19 family. PAN2 subfamily. In terms of assembly, forms a heterotrimer with an asymmetric homodimer of the regulatory subunit PAN3 to form the poly(A)-nuclease (PAN) deadenylation complex. Requires a divalent metal cation as cofactor.

It localises to the cytoplasm. It catalyses the reaction Exonucleolytic cleavage of poly(A) to 5'-AMP.. Positively regulated by the regulatory subunit PAN3. In terms of biological role, catalytic subunit of the poly(A)-nuclease (PAN) deadenylation complex, one of two cytoplasmic mRNA deadenylases involved in mRNA turnover. PAN specifically shortens poly(A) tails of RNA and the activity is stimulated by poly(A)-binding protein PAB1. PAN deadenylation is followed by rapid degradation of the shortened mRNA tails by the CCR4-NOT complex. Deadenylated mRNAs are then degraded by two alternative mechanisms, namely exosome-mediated 3'-5' exonucleolytic degradation, or deadenylation-dependent mRNA decaping and subsequent 5'-3' exonucleolytic degradation by XRN1. May also be involved in post-transcriptional maturation of mRNA poly(A) tails. This chain is PAN2-PAN3 deadenylation complex catalytic subunit PAN2, found in Chaetomium globosum (strain ATCC 6205 / CBS 148.51 / DSM 1962 / NBRC 6347 / NRRL 1970) (Soil fungus).